The primary structure comprises 350 residues: Salicylate decarboxylase (350 aa).

The protein belongs to the metallo-dependent hydrolases superfamily. Homotetramer.

It catalyses the reaction salicylate + H(+) = phenol + CO2. With respect to regulation, inhibited by AgNO(3), HgCl(2), p-chloromercuribenzoic acid and NiCl(2). Functionally, reversibly catalyzes the regioselective carboxylation of phenol to form salicylic acid. Involved in a pathway for the degradation of salicylate via phenol. Also catalyzes the decarboxylation of beta-resorcylic acid (2,4-dihydroxybenzoic acid) into resorcinol (1,3-dihydroxybenzene), gamma-resorcylic acid (2,6-dihydroxybenzoic acid) into resorcinol, 2,3-dihydroxybenzoic acid into catechol (1,2-dihydroxybenzene), and 4-aminosalicylic acid into 3-aminophenol. The chain is Salicylate decarboxylase from Cutaneotrichosporon moniliiforme (Yeast).